A 295-amino-acid chain; its full sequence is Transcriptional regulator SirC (295 aa).

The region spanning 195–292 (EKVYNIIISD…KITPLSFMRT (98 aa)) is the HTH araC/xylS-type domain. 2 DNA-binding regions (H-T-H motif) span residues 212–233 (AEVA…AAEE) and 259–282 (ISQV…KRHF).

In terms of biological role, positive regulator of the expression of the invasion-associated type III secretion system encoded within SPI-1 (pathogenicity island 1). This Salmonella typhi protein is Transcriptional regulator SirC (sirC).